A 265-amino-acid polypeptide reads, in one-letter code: UPF0294 protein KPK_4510 (265 aa).

The protein belongs to the UPF0294 family.

It localises to the cytoplasm. The polypeptide is UPF0294 protein KPK_4510 (Klebsiella pneumoniae (strain 342)).